Reading from the N-terminus, the 623-residue chain is MSKVIGIDLGTTNSCVAVYERGESKVIPNKEGKNTTPSVVAFTDKGEVLVGDSAKRQAVTNPEKTIYSIKRIMGLMINEDAAKEAKNRLPYHITERNGACAIEIAGKIYTPQEISAKVLMKLKEDAEAFLGESVVDAVITVPAYFNDAQRKATKEAGTIAGLNVLRIINEPTSAALAYGLDKKDSEKIVVYDLGGGTFDVTVLETGDNVVEVLATGGNAFLGGDDFDNKLIDFLANEFKDETGIDLKNDVMALQRLKEAAENAKKELSSANETEINLPFITADASGPKHLVKKLTRAKFEGMIDSLVAETITKINEVVSDAGLKKDEIKEIVMVGGSTRVPLVQEEVKKAFNKDLNKSVNPDEVVAIGAAIQGAVIKGDVKDVLLLDVTPLSLGIETLGGVMTKIIEKGTTIPTKKEQVFSTAEDNQSAVTINVLQGEREFSRDNKSLGNFNLEGIPPAPRGMPQIEVTFDIDANGILTVSAKDKATGKAQEIKITGSSGLSEEEINNMVKDAELHKEEDKKRKEAVDARNAADSLAHQVEKSLSELGEKVAAADKENIQKALDDLRETLKNQNASKEEIESKMKALSEVSHKLAENMYKKDEPNTANDKKKKDDDVIDAEVE.

Thr-197 carries the phosphothreonine; by autocatalysis modification. A compositionally biased stretch (basic and acidic residues) spans 595 to 615 (AENMYKKDEPNTANDKKKKDD). A disordered region spans residues 595-623 (AENMYKKDEPNTANDKKKKDDDVIDAEVE).

The protein belongs to the heat shock protein 70 family.

In terms of biological role, acts as a chaperone. In Campylobacter jejuni subsp. jejuni serotype O:6 (strain 81116 / NCTC 11828), this protein is Chaperone protein DnaK.